The following is a 409-amino-acid chain: Elongation factor Tu, chloroplastic (409 aa).

Residues 10-214 (KPHVNIGTIG…AVDAYIPTPE (205 aa)) enclose the tr-type G domain. The tract at residues 19–26 (GHVDHGKT) is G1. 19-26 (GHVDHGKT) provides a ligand contact to GTP. T26 is a binding site for Mg(2+). A G2 region spans residues 60 to 64 (GITIN). A G3 region spans residues 81–84 (DCPG). GTP is bound by residues 81 to 85 (DCPGH) and 136 to 139 (NKQD). Residues 136 to 139 (NKQD) are G4. The G5 stretch occupies residues 174-176 (SAL).

The protein belongs to the TRAFAC class translation factor GTPase superfamily. Classic translation factor GTPase family. EF-Tu/EF-1A subfamily.

It is found in the plastid. The protein localises to the chloroplast. It carries out the reaction GTP + H2O = GDP + phosphate + H(+). GTP hydrolase that promotes the GTP-dependent binding of aminoacyl-tRNA to the A-site of ribosomes during protein biosynthesis. The polypeptide is Elongation factor Tu, chloroplastic (tufA) (Thalassiosira pseudonana (Marine diatom)).